We begin with the raw amino-acid sequence, 547 residues long: Chaperonin GroEL (547 aa).

ATP-binding positions include T30–P33, K51, D87–T91, G415, and D496.

It belongs to the chaperonin (HSP60) family. As to quaternary structure, forms a cylinder of 14 subunits composed of two heptameric rings stacked back-to-back. Interacts with the co-chaperonin GroES.

The protein resides in the cytoplasm. It catalyses the reaction ATP + H2O + a folded polypeptide = ADP + phosphate + an unfolded polypeptide.. Functionally, together with its co-chaperonin GroES, plays an essential role in assisting protein folding. The GroEL-GroES system forms a nano-cage that allows encapsulation of the non-native substrate proteins and provides a physical environment optimized to promote and accelerate protein folding. This Haemophilus ducreyi (strain 35000HP / ATCC 700724) protein is Chaperonin GroEL.